The chain runs to 424 residues: Arogenate dehydratase 4, chloroplastic (424 aa).

Residues 1-34 (MQAATSCDLKFRSTDPTSRNKCFSHAIPKRVAVT) constitute a chloroplast transit peptide. Residues 126–303 (RVAYQGVPGA…NVTRFLMLAR (178 aa)) form the Prephenate dehydratase domain. The ACT domain maps to 319-410 (VFAAQEHKGT…SFLRVLGSYP (92 aa)).

Expressed in roots, leaves, stems, flowers and siliques. More abundant in stems and roots.

It localises to the plastid. The protein resides in the chloroplast stroma. The catalysed reaction is L-arogenate + H(+) = L-phenylalanine + CO2 + H2O. It functions in the pathway amino-acid biosynthesis; L-phenylalanine biosynthesis; L-phenylalanine from L-arogenate: step 1/1. Converts the prephenate produced from the shikimate-chorismate pathway into phenylalanine. The chain is Arogenate dehydratase 4, chloroplastic from Arabidopsis thaliana (Mouse-ear cress).